Consider the following 765-residue polypeptide: Protein transport protein sec23-2 (765 aa).

4 residues coordinate Zn(2+): Cys56, Cys60, Cys79, and Cys82. Residues Ser565 and Ser566 each carry the phosphoserine modification.

The protein belongs to the SEC23/SEC24 family. SEC23 subfamily. In terms of assembly, the COPII coat is composed of at least 5 proteins: the sec23/24 complex, the sec13/31 complex, and the protein sar1.

Its subcellular location is the cytoplasm. It is found in the cytoplasmic vesicle. The protein localises to the COPII-coated vesicle membrane. The protein resides in the endoplasmic reticulum membrane. It localises to the golgi apparatus membrane. Functionally, component of the coat protein complex II (COPII) which promotes the formation of transport vesicles from the endoplasmic reticulum (ER). The coat has two main functions, the physical deformation of the endoplasmic reticulum membrane into vesicles and the selection of cargo molecules. The chain is Protein transport protein sec23-2 (sec232) from Schizosaccharomyces pombe (strain 972 / ATCC 24843) (Fission yeast).